A 130-amino-acid chain; its full sequence is Glycine cleavage system H protein (130 aa).

The region spanning 22-103 (KAYIGISDCA…PYGSWIIAVE (82 aa)) is the Lipoyl-binding domain. Residue K63 is modified to N6-lipoyllysine.

It belongs to the GcvH family. As to quaternary structure, the glycine cleavage system is composed of four proteins: P, T, L and H. It depends on (R)-lipoate as a cofactor.

In terms of biological role, the glycine cleavage system catalyzes the degradation of glycine. The H protein shuttles the methylamine group of glycine from the P protein to the T protein. The protein is Glycine cleavage system H protein of Clostridium botulinum (strain Kyoto / Type A2).